The primary structure comprises 464 residues: Glutamate decarboxylase beta (464 aa).

The residue at position 275 (K275) is an N6-(pyridoxal phosphate)lysine.

It belongs to the group II decarboxylase family. Pyridoxal 5'-phosphate is required as a cofactor.

The enzyme catalyses L-glutamate + H(+) = 4-aminobutanoate + CO2. Converts internalized glutamate to GABA and increases the internal pH. Involved in glutamate-dependent acid resistance in gastric fluid. This chain is Glutamate decarboxylase beta (gadB), found in Listeria monocytogenes serovar 1/2a (strain ATCC BAA-679 / EGD-e).